We begin with the raw amino-acid sequence, 398 residues long: Acetylornithine aminotransferase (398 aa).

Pyridoxal 5'-phosphate is bound by residues 105–106 (GA) and F138. Position 141 (R141) interacts with N(2)-acetyl-L-ornithine. 223–226 (DEVQ) provides a ligand contact to pyridoxal 5'-phosphate. The residue at position 252 (K252) is an N6-(pyridoxal phosphate)lysine. N(2)-acetyl-L-ornithine is bound at residue T280. T281 provides a ligand contact to pyridoxal 5'-phosphate.

This sequence belongs to the class-III pyridoxal-phosphate-dependent aminotransferase family. ArgD subfamily. In terms of assembly, homodimer. The cofactor is pyridoxal 5'-phosphate.

Its subcellular location is the cytoplasm. The catalysed reaction is N(2)-acetyl-L-ornithine + 2-oxoglutarate = N-acetyl-L-glutamate 5-semialdehyde + L-glutamate. The protein operates within amino-acid biosynthesis; L-arginine biosynthesis; N(2)-acetyl-L-ornithine from L-glutamate: step 4/4. The protein is Acetylornithine aminotransferase of Methanocaldococcus jannaschii (strain ATCC 43067 / DSM 2661 / JAL-1 / JCM 10045 / NBRC 100440) (Methanococcus jannaschii).